A 524-amino-acid polypeptide reads, in one-letter code: PiggyBac transposable element-derived protein 5 (524 aa).

Residues 30-117 (DDVFGESGPD…DTGGPTRKMP (88 aa)) are disordered. Positions 47–59 (STSAASRSSSAAS) are enriched in low complexity. Over residues 67–79 (PGPPGAAPPPPRA) the composition is skewed to pro residues. Residues 98–108 (LRDRPPPRFED) are compositionally biased toward basic and acidic residues. The residue at position 521 (S521) is a Phosphoserine.

The protein resides in the nucleus. In terms of biological role, transposase that mediates sequence-specific genomic rearrangements. Can induce genomic rearrangements that inactivate the HPRT1 gene. The protein is PiggyBac transposable element-derived protein 5 (PGBD5) of Homo sapiens (Human).